Reading from the N-terminus, the 388-residue chain is Succinate--CoA ligase [ADP-forming] subunit beta (388 aa).

Residues Lys-9–His-244 enclose the ATP-grasp domain. ATP contacts are provided by residues Lys-46, Gly-53 to Gly-55, Glu-99, Ser-102, and Glu-107. Mg(2+) is bound by residues Asn-199 and Asp-213. Substrate is bound by residues Asn-264 and Gly-321–Val-323.

Belongs to the succinate/malate CoA ligase beta subunit family. In terms of assembly, heterotetramer of two alpha and two beta subunits. It depends on Mg(2+) as a cofactor.

It catalyses the reaction succinate + ATP + CoA = succinyl-CoA + ADP + phosphate. The catalysed reaction is GTP + succinate + CoA = succinyl-CoA + GDP + phosphate. Its pathway is carbohydrate metabolism; tricarboxylic acid cycle; succinate from succinyl-CoA (ligase route): step 1/1. In terms of biological role, succinyl-CoA synthetase functions in the citric acid cycle (TCA), coupling the hydrolysis of succinyl-CoA to the synthesis of either ATP or GTP and thus represents the only step of substrate-level phosphorylation in the TCA. The beta subunit provides nucleotide specificity of the enzyme and binds the substrate succinate, while the binding sites for coenzyme A and phosphate are found in the alpha subunit. In Aliivibrio fischeri (strain ATCC 700601 / ES114) (Vibrio fischeri), this protein is Succinate--CoA ligase [ADP-forming] subunit beta.